Here is a 642-residue protein sequence, read N- to C-terminus: Threonine--tRNA ligase (642 aa).

The region spanning 1-61 is the TGS domain; the sequence is MPVITLPDGS…DADATVAIIT (61 aa). Residues 243 to 534 are catalytic; sequence DHRKIGKQLD…LTEEFAGFFP (292 aa). Zn(2+) contacts are provided by Cys334, His385, and His511.

Belongs to the class-II aminoacyl-tRNA synthetase family. Homodimer. Requires Zn(2+) as cofactor.

Its subcellular location is the cytoplasm. The catalysed reaction is tRNA(Thr) + L-threonine + ATP = L-threonyl-tRNA(Thr) + AMP + diphosphate + H(+). Functionally, catalyzes the attachment of threonine to tRNA(Thr) in a two-step reaction: L-threonine is first activated by ATP to form Thr-AMP and then transferred to the acceptor end of tRNA(Thr). Also edits incorrectly charged L-seryl-tRNA(Thr). This chain is Threonine--tRNA ligase, found in Edwardsiella ictaluri (strain 93-146).